The sequence spans 192 residues: Protein GrpE (192 aa).

The protein belongs to the GrpE family. Homodimer.

It is found in the cytoplasm. Functionally, participates actively in the response to hyperosmotic and heat shock by preventing the aggregation of stress-denatured proteins, in association with DnaK and GrpE. It is the nucleotide exchange factor for DnaK and may function as a thermosensor. Unfolded proteins bind initially to DnaJ; upon interaction with the DnaJ-bound protein, DnaK hydrolyzes its bound ATP, resulting in the formation of a stable complex. GrpE releases ADP from DnaK; ATP binding to DnaK triggers the release of the substrate protein, thus completing the reaction cycle. Several rounds of ATP-dependent interactions between DnaJ, DnaK and GrpE are required for fully efficient folding. In Neisseria gonorrhoeae (strain ATCC 700825 / FA 1090), this protein is Protein GrpE.